Reading from the N-terminus, the 325-residue chain is Probable serine/threonine-protein phosphatase 2A activator 1 (325 aa).

Belongs to the PTPA-type PPIase family.

It is found in the cytoplasm. The catalysed reaction is [protein]-peptidylproline (omega=180) = [protein]-peptidylproline (omega=0). PPIases accelerate the folding of proteins. It catalyzes the cis-trans isomerization of proline imidic peptide bonds in oligopeptides. Acts as a regulatory subunit for PP2A-like phosphatases modulating their activity or substrate specificity, probably by inducing a conformational change in the catalytic subunit, a direct target of the PPIase. This is Probable serine/threonine-protein phosphatase 2A activator 1 (ppp2r4A) from Dictyostelium discoideum (Social amoeba).